Reading from the N-terminus, the 83-residue chain is Cytochrome b559 subunit alpha (83 aa).

A helical membrane pass occupies residues 21–35 (VIHSITIPSLFIAGW). His23 provides a ligand contact to heme.

It belongs to the PsbE/PsbF family. As to quaternary structure, heterodimer of an alpha subunit and a beta subunit. PSII is composed of 1 copy each of membrane proteins PsbA, PsbB, PsbC, PsbD, PsbE, PsbF, PsbH, PsbI, PsbJ, PsbK, PsbL, PsbM, PsbT, PsbX, PsbY, PsbZ, Psb30/Ycf12, at least 3 peripheral proteins of the oxygen-evolving complex and a large number of cofactors. It forms dimeric complexes. The cofactor is heme b.

It is found in the plastid. The protein localises to the chloroplast thylakoid membrane. In terms of biological role, this b-type cytochrome is tightly associated with the reaction center of photosystem II (PSII). PSII is a light-driven water:plastoquinone oxidoreductase that uses light energy to abstract electrons from H(2)O, generating O(2) and a proton gradient subsequently used for ATP formation. It consists of a core antenna complex that captures photons, and an electron transfer chain that converts photonic excitation into a charge separation. The protein is Cytochrome b559 subunit alpha of Oenothera berteroana (Bertero's evening primrose).